The chain runs to 328 residues: Peroxidase 63 (328 aa).

Positions 1 to 27 (MAEQSQLKNLTIILLLLCLSFQSLSFA) are cleaved as a signal peptide. Cystine bridges form between Cys-41–Cys-122, Cys-74–Cys-79, Cys-128–Cys-324, and Cys-207–Cys-234. The active-site Proton acceptor is the His-72. Residues Asp-73, Gly-78, Asp-80, and Ser-82 each coordinate Ca(2+). Pro-170 serves as a coordination point for substrate. Residue His-200 participates in heme b binding. A Ca(2+)-binding site is contributed by Thr-201. 2 N-linked (GlcNAc...) asparagine glycosylation sites follow: Asn-217 and Asn-218. The Ca(2+) site is built by Asp-248, Thr-251, and Asp-256.

It belongs to the peroxidase family. Classical plant (class III) peroxidase subfamily. Requires heme b as cofactor. Ca(2+) is required as a cofactor.

It is found in the secreted. The catalysed reaction is 2 a phenolic donor + H2O2 = 2 a phenolic radical donor + 2 H2O. Its function is as follows. Removal of H(2)O(2), oxidation of toxic reductants, biosynthesis and degradation of lignin, suberization, auxin catabolism, response to environmental stresses such as wounding, pathogen attack and oxidative stress. These functions might be dependent on each isozyme/isoform in each plant tissue. The polypeptide is Peroxidase 63 (PER63) (Arabidopsis thaliana (Mouse-ear cress)).